A 202-amino-acid chain; its full sequence is Large ribosomal subunit protein uL5 (202 aa).

Low complexity predominate over residues 1 to 17 (MSAKAATKNATKVAVKA). Positions 1–30 (MSAKAATKNATKVAVKAPEATTPVETKKSK) are disordered.

Belongs to the universal ribosomal protein uL5 family. Component of the large ribosomal subunit.

It localises to the nucleus. Its subcellular location is the cytoplasm. In terms of biological role, component of the ribosome, a large ribonucleoprotein complex responsible for the synthesis of proteins in the cell. The small ribosomal subunit (SSU) binds messenger RNAs (mRNAs) and translates the encoded message by selecting cognate aminoacyl-transfer RNA (tRNA) molecules. The large subunit (LSU) contains the ribosomal catalytic site termed the peptidyl transferase center (PTC), which catalyzes the formation of peptide bonds, thereby polymerizing the amino acids delivered by tRNAs into a polypeptide chain. The nascent polypeptides leave the ribosome through a tunnel in the LSU and interact with protein factors that function in enzymatic processing, targeting, and the membrane insertion of nascent chains at the exit of the ribosomal tunnel. The protein is Large ribosomal subunit protein uL5 (rpl11) of Dictyostelium discoideum (Social amoeba).